The following is a 236-amino-acid chain: Purine nucleoside phosphorylase DeoD-type (236 aa).

His5 provides a ligand contact to a purine D-ribonucleoside. Phosphate-binding positions include Gly21, Arg25, Arg44, and 88–91; that span reads RIGS. Residues 180 to 182 and 204 to 205 contribute to the a purine D-ribonucleoside site; these read EME and SD. Asp205 (proton donor) is an active-site residue.

This sequence belongs to the PNP/UDP phosphorylase family. As to quaternary structure, homohexamer; trimer of homodimers.

It catalyses the reaction a purine D-ribonucleoside + phosphate = a purine nucleobase + alpha-D-ribose 1-phosphate. The catalysed reaction is a purine 2'-deoxy-D-ribonucleoside + phosphate = a purine nucleobase + 2-deoxy-alpha-D-ribose 1-phosphate. In terms of biological role, catalyzes the reversible phosphorolytic breakdown of the N-glycosidic bond in the beta-(deoxy)ribonucleoside molecules, with the formation of the corresponding free purine bases and pentose-1-phosphate. The protein is Purine nucleoside phosphorylase DeoD-type of Hahella chejuensis (strain KCTC 2396).